Reading from the N-terminus, the 386-residue chain is MQMADLEKKLENSVLPPLLKRELSEKILKEEISEEYLVDEIISETIRAYERTLVEPGEAVGVVAAQSIGEPGTQMTMRTFHYAGVAELNVTLGLPRMIEIVDARKEPSTPTMTIYLNDDFKGDREKASMVAKNIESTNVESVSEDISVDLINECITIVLNTHQLESRGLTVADVIESIKSKMKLKIEDHENVLNLKIKTPSLKALRKRLPKVRAIHLKGVQNIKRVIIRKEVDEYILYSEGSNIKEVFDIEGVDTTKTTTNNIVEIQDVLGIEAARNAIIYEMDATLGNQGLTVDKRHLMMVADLMCTDGVVKPIGRHGIGGEKASVLARAAFEETVKHLYSASMRGYVDELGGVVENIIVGKPIAMGTGCIDVCIDKTYEEGKEL.

It belongs to the RNA polymerase beta' chain family. Part of the RNA polymerase complex.

The protein localises to the cytoplasm. It catalyses the reaction RNA(n) + a ribonucleoside 5'-triphosphate = RNA(n+1) + diphosphate. Functionally, DNA-dependent RNA polymerase (RNAP) catalyzes the transcription of DNA into RNA using the four ribonucleoside triphosphates as substrates. Forms part of the jaw domain. This Methanococcus maripaludis (strain C6 / ATCC BAA-1332) protein is DNA-directed RNA polymerase subunit Rpo1C.